The following is a 575-amino-acid chain: Urease subunit alpha (575 aa).

A Urease domain is found at 138-575; that stretch reads GAVDCHVHLI…LPMTQRYFLF (438 aa). Residues His-143, His-145, and Lys-226 each contribute to the Ni(2+) site. The residue at position 226 (Lys-226) is an N6-carboxylysine. Residue His-228 coordinates substrate. Ni(2+) is bound by residues His-255 and His-281. His-329 acts as the Proton donor in catalysis. Position 369 (Asp-369) interacts with Ni(2+).

The protein belongs to the metallo-dependent hydrolases superfamily. Urease alpha subunit family. Heterotrimer of UreA (gamma), UreB (beta) and UreC (alpha) subunits. Three heterotrimers associate to form the active enzyme. Ni cation is required as a cofactor. Carboxylation allows a single lysine to coordinate two nickel ions.

Its subcellular location is the cytoplasm. The catalysed reaction is urea + 2 H2O + H(+) = hydrogencarbonate + 2 NH4(+). It participates in nitrogen metabolism; urea degradation; CO(2) and NH(3) from urea (urease route): step 1/1. The sequence is that of Urease subunit alpha from Frankia casuarinae (strain DSM 45818 / CECT 9043 / HFP020203 / CcI3).